Here is a 279-residue protein sequence, read N- to C-terminus: MKIIILLGFLGATLSAPLIPQRLMSASNSNELLLNLNNGQLLPLQLQGPLNSWIPPFSGILQQQQQAQIPGLSQFSLSALDQFAGLLPNQIPLTGEASFAQGAQAGQVDPLQLQTPPQTQPGPSHVMPYVFSFKMPQEQGQMFQYYPVYMVLPWEQPQQTVPRSPQQTRQQQYEEQIPFYAQFGYIPQLAEPAISGGQQQLAFDPQLGTAPEIAVMSTGEEIPYLQKEAINFRHDSAGVFMPSTSPKPSTTNVFTSAVDQTITPELPEEKDKTDSLREP.

A signal peptide spans 1–15 (MKIIILLGFLGATLS). Residues Thr-115 and Thr-119 are each glycosylated (O-linked (GalNAc...) threonine). Residues 127 to 129 (MPY) form an interaction with ARHGEF5 region. The span at 243–263 (STSPKPSTTNVFTSAVDQTIT) shows a compositional bias: polar residues. Residues 243–279 (STSPKPSTTNVFTSAVDQTITPELPEEKDKTDSLREP) form a disordered region. Thr-244 carries an O-linked (GalNAc...) threonine glycan. Ser-249 carries an O-linked (GalNAc...) serine glycan. 3 O-linked (GalNAc...) threonine glycosylation sites follow: Thr-250, Thr-251, and Thr-255. A glycan (O-linked (GalNAc...) serine) is linked at Ser-256. O-linked (GalNAc...) threonine glycosylation is found at Thr-261, Thr-263, and Thr-273. Positions 267–279 (PEEKDKTDSLREP) are enriched in basic and acidic residues. An O-linked (GalNAc...) serine glycan is attached at Ser-275.

The protein belongs to the ODAM family. Interacts (via C-terminus) with ARHGEF5. In terms of processing, O-glycosylated. As to expression, expressed in the junctional epithelium of healthy teeth. In periodontitis, absent in the pocket epithelium of the diseased periodontium but is detected in the gingival crevicular fluid.

It is found in the secreted. The protein localises to the cytoplasm. The protein resides in the nucleus. In terms of biological role, tooth-associated epithelia protein that probably plays a role in odontogenesis, the complex process that results in the initiation and generation of the tooth. May be incorporated in the enamel matrix at the end of mineralization process. Involved in the induction of RHOA activity via interaction with ARHGEF and expression of downstream factors such as ROCK. Plays a role in attachment of the junctional epithelium to the tooth surface. The sequence is that of Odontogenic ameloblast-associated protein (ODAM) from Homo sapiens (Human).